The primary structure comprises 240 residues: Ribonuclease PH (240 aa).

Phosphate-binding positions include arginine 87 and 125 to 127 (GTR).

The protein belongs to the RNase PH family. As to quaternary structure, homohexameric ring arranged as a trimer of dimers.

It carries out the reaction tRNA(n+1) + phosphate = tRNA(n) + a ribonucleoside 5'-diphosphate. Functionally, phosphorolytic 3'-5' exoribonuclease that plays an important role in tRNA 3'-end maturation. Removes nucleotide residues following the 3'-CCA terminus of tRNAs; can also add nucleotides to the ends of RNA molecules by using nucleoside diphosphates as substrates, but this may not be physiologically important. Probably plays a role in initiation of 16S rRNA degradation (leading to ribosome degradation) during starvation. The chain is Ribonuclease PH from Crocosphaera subtropica (strain ATCC 51142 / BH68) (Cyanothece sp. (strain ATCC 51142)).